The chain runs to 352 residues: Glycerol-1-phosphate dehydrogenase [NAD(P)+] (352 aa).

Residues 98-102 and 120-123 contribute to the NAD(+) site; these read GKAID and TAAS. Residue Asp-125 participates in substrate binding. Ser-129 contributes to the NAD(+) binding site. Substrate is bound at residue Asp-172. The Zn(2+) site is built by Asp-172 and His-252. Position 256 (His-256) interacts with substrate. His-268 is a Zn(2+) binding site.

Belongs to the glycerol-1-phosphate dehydrogenase family. It depends on Zn(2+) as a cofactor.

Its subcellular location is the cytoplasm. It catalyses the reaction sn-glycerol 1-phosphate + NAD(+) = dihydroxyacetone phosphate + NADH + H(+). The catalysed reaction is sn-glycerol 1-phosphate + NADP(+) = dihydroxyacetone phosphate + NADPH + H(+). It participates in membrane lipid metabolism; glycerophospholipid metabolism. In terms of biological role, catalyzes the NAD(P)H-dependent reduction of dihydroxyacetonephosphate (DHAP or glycerone phosphate) to glycerol 1-phosphate (G1P). The G1P thus generated is used as the glycerophosphate backbone of phospholipids in the cellular membranes of Archaea. The sequence is that of Glycerol-1-phosphate dehydrogenase [NAD(P)+] from Haloarcula marismortui (strain ATCC 43049 / DSM 3752 / JCM 8966 / VKM B-1809) (Halobacterium marismortui).